We begin with the raw amino-acid sequence, 71 residues long: Small ribosomal subunit protein bS21 (71 aa).

A compositionally biased stretch (basic residues) spans alanine 49 to lysine 59. The segment at alanine 49–tyrosine 71 is disordered. The span at valine 60–tyrosine 71 shows a compositional bias: basic and acidic residues.

This sequence belongs to the bacterial ribosomal protein bS21 family.

This Stutzerimonas stutzeri (strain A1501) (Pseudomonas stutzeri) protein is Small ribosomal subunit protein bS21.